A 520-amino-acid polypeptide reads, in one-letter code: Endosomal/lysosomal proton channel TMEM175 (520 aa).

Residues 1-27 (MGENDESEIIEHHDDEEMEKRRPPRTH) form a disordered region. At 1-49 (MGENDESEIIEHHDDEEMEKRRPPRTHAQSFLESVASSVKEGHSSTQSS) the chain is on the cytoplasmic side. Residues 9–21 (IIEHHDDEEMEKR) show a composition bias toward basic and acidic residues. The chain crosses the membrane as a helical span at residues 50–72 (HRLLAYSDALISIIATVMILPVA). Positions 51–57 (RLLAYSD) match the RxxxFSD motif 1 motif. Topologically, residues 73-93 (HTKIQEDEELKQSIQALLTTK) are lumenal. Positions 74 to 79 (TKIQED) are short helix H1-1. Residues 81-87 (ELKQSIQ) form a short helix H2-1 region. A helical transmembrane segment spans residues 94–116 (IAVYLMTFLIVTVAWAAHIRLFQ). Over 117–122 (VIERID) the chain is Cytoplasmic. A helical membrane pass occupies residues 123 to 144 (DTLALLNLACMMLITFLPYTFS). Residues 145–154 (LMATFPNNIL) lie on the Lumenal side of the membrane. A helical transmembrane segment spans residues 155-176 (GILLFCACVMVIGLIQALIVLY). Topologically, residues 177–200 (GFSHPFLLNDQIQMSENQAYYKQH) are cytoplasmic. 2 helical membrane-spanning segments follow: residues 201–221 (ILKV…FSFI) and 222–242 (FFQL…ISQC). Over 243–274 (LKWIRSKAIGGQTDESPDSMPFYTYHPSEPLS) the chain is Cytoplasmic. The helical transmembrane segment at 275 to 299 (KERVEAFSDGVFAIVATLLILDICE) threads the bilayer. The RxxxFSD motif 2 signature appears at 277-283 (RVEAFSD). Topologically, residues 300 to 326 (GNVPDPSVVKKKFDNSLIAALQEYGPE) are lumenal. The interval 305-313 (PSVVKKKFD) is short helix H1-2. A short helix H2-2 region spans residues 315–321 (SLIAALQ). The chain crosses the membrane as a helical span at residues 327–349 (YLAYFGSFVTVGLLWFVHHSLFL). The Cytoplasmic segment spans residues 350 to 355 (HVTKAT). A helical transmembrane segment spans residues 356 to 377 (RLMGLFNTFSLAFVGGLPLAYQ). The Lumenal segment spans residues 378 to 392 (LTHESPRGSRNELEA). A helical membrane pass occupies residues 393–413 (VQISCVIIFFASLFQLAIWVT). Residues 414-433 (ALFTERETLHPYVRYGGREH) are Cytoplasmic-facing. A helical membrane pass occupies residues 434-457 (TFMLAKLSLYPCVALGTFFITCIL). At 458–459 (SR) the chain is on the lumenal side. The chain crosses the membrane as a helical span at residues 460–486 (FSAPIFHMMEICIPFAFLLLRLLVRVA). The Cytoplasmic portion of the chain corresponds to 487–520 (LALLRWLFCSARNDLERIPVEEEESRLPINDIVT).

The protein belongs to the TMEM175 family. Homodimer.

The protein localises to the endosome membrane. It localises to the lysosome membrane. It catalyses the reaction H(+)(in) = H(+)(out). The catalysed reaction is K(+)(in) = K(+)(out). Active at low pH (under pH 4.6): proton channel activity is activated by luminal side protons. Polyunsaturated fatty acids, such as arachidonic acid, also activate the channel activity. Functionally, proton-activated proton channel that catalyzes proton efflux from endosomes and lysosomes to maintain a steady-state pH. Activated at low pH (under pH 4.6) by luminal side protons: selectively mediates lysosomal proton release from lysosomes, eliciting a proton leak that balances V-ATPase activity to maintain pH homeostasis. Regulation of lumenal pH stability is required for autophagosome-lysosome fusion. Also acts as a potassium channel at higher pH, regulating potassium conductance in endosomes and lysosomes. This chain is Endosomal/lysosomal proton channel TMEM175, found in Danio rerio (Zebrafish).